Consider the following 450-residue polypeptide: Chromosomal replication initiator protein DnaA (450 aa).

The interval 1 to 77 (MTENEQIFWN…EVYNAQIAVD (77 aa)) is domain I, interacts with DnaA modulators. The domain II stretch occupies residues 77 to 109 (DYVYEDDLMIEQQHQGQQGYTEQAFQQLPAVQS). The interval 110-328 (DLNPKYSFDN…GALKDISLVA (219 aa)) is domain III, AAA+ region. G154, G156, K157, and T158 together coordinate ATP. The interval 329 to 450 (NFKQIDTITV…EIETIKNKIK (122 aa)) is domain IV, binds dsDNA.

The protein belongs to the DnaA family. As to quaternary structure, oligomerizes as a right-handed, spiral filament on DNA at oriC.

Its subcellular location is the cytoplasm. Its function is as follows. Plays an essential role in the initiation and regulation of chromosomal replication. ATP-DnaA binds to the origin of replication (oriC) to initiate formation of the DNA replication initiation complex once per cell cycle. Binds the DnaA box (a 9 base pair repeat at the origin) and separates the double-stranded (ds)DNA. Forms a right-handed helical filament on oriC DNA; dsDNA binds to the exterior of the filament while single-stranded (ss)DNA is stabiized in the filament's interior. The ATP-DnaA-oriC complex binds and stabilizes one strand of the AT-rich DNA unwinding element (DUE), permitting loading of DNA polymerase. After initiation quickly degrades to an ADP-DnaA complex that is not apt for DNA replication. Binds acidic phospholipids. The protein is Chromosomal replication initiator protein DnaA of Streptococcus equi subsp. equi (strain 4047).